We begin with the raw amino-acid sequence, 117 residues long: Large ribosomal subunit protein uL18 (117 aa).

It belongs to the universal ribosomal protein uL18 family. In terms of assembly, part of the 50S ribosomal subunit; part of the 5S rRNA/L5/L18/L25 subcomplex. Contacts the 5S and 23S rRNAs.

In terms of biological role, this is one of the proteins that bind and probably mediate the attachment of the 5S RNA into the large ribosomal subunit, where it forms part of the central protuberance. This chain is Large ribosomal subunit protein uL18, found in Idiomarina loihiensis (strain ATCC BAA-735 / DSM 15497 / L2-TR).